The following is an 875-amino-acid chain: Translation initiation factor IF-2 (875 aa).

Disordered regions lie at residues 123–204 (EKEK…EKPK) and 240–278 (ETKE…PVET). The span at 240–252 (ETKEEKAELEALR) shows a compositional bias: basic and acidic residues. A compositionally biased stretch (basic residues) spans 259–268 (PKKKKKKKKK). Residues 269-278 (KEEEKAPVET) show a composition bias toward basic and acidic residues. Positions 379-547 (ERPPVVTVMG…NILLVSEILE (169 aa)) constitute a tr-type G domain. The tract at residues 388 to 395 (GHVDHGKT) is G1. 388–395 (GHVDHGKT) contributes to the GTP binding site. Residues 413–417 (GITQH) form a G2 region. A G3 region spans residues 435–438 (DTPG). GTP is bound by residues 435 to 439 (DTPGH) and 489 to 492 (NKID). Positions 489-492 (NKID) are G4. Positions 525–527 (SAK) are G5.

It belongs to the TRAFAC class translation factor GTPase superfamily. Classic translation factor GTPase family. IF-2 subfamily.

Its subcellular location is the cytoplasm. In terms of biological role, one of the essential components for the initiation of protein synthesis. Protects formylmethionyl-tRNA from spontaneous hydrolysis and promotes its binding to the 30S ribosomal subunits. Also involved in the hydrolysis of GTP during the formation of the 70S ribosomal complex. The protein is Translation initiation factor IF-2 of Persephonella marina (strain DSM 14350 / EX-H1).